Consider the following 329-residue polypeptide: Acetyl-coenzyme A carboxylase carboxyl transferase subunit alpha (329 aa).

Residues 40–294 enclose the CoA carboxyltransferase C-terminal domain; it reads QLESLAARRR…RAALERHLGE (255 aa).

It belongs to the AccA family. Acetyl-CoA carboxylase is a heterohexamer composed of biotin carboxyl carrier protein (AccB), biotin carboxylase (AccC) and two subunits each of ACCase subunit alpha (AccA) and ACCase subunit beta (AccD).

Its subcellular location is the cytoplasm. It carries out the reaction N(6)-carboxybiotinyl-L-lysyl-[protein] + acetyl-CoA = N(6)-biotinyl-L-lysyl-[protein] + malonyl-CoA. It functions in the pathway lipid metabolism; malonyl-CoA biosynthesis; malonyl-CoA from acetyl-CoA: step 1/1. Its function is as follows. Component of the acetyl coenzyme A carboxylase (ACC) complex. First, biotin carboxylase catalyzes the carboxylation of biotin on its carrier protein (BCCP) and then the CO(2) group is transferred by the carboxyltransferase to acetyl-CoA to form malonyl-CoA. The chain is Acetyl-coenzyme A carboxylase carboxyl transferase subunit alpha from Parasynechococcus marenigrum (strain WH8102).